The following is a 483-amino-acid chain: Glutamyl-tRNA(Gln) amidotransferase subunit A (483 aa).

Residues lysine 76 and serine 151 each act as charge relay system in the active site. The Acyl-ester intermediate role is filled by serine 175.

The protein belongs to the amidase family. GatA subfamily. As to quaternary structure, heterotrimer of A, B and C subunits.

It catalyses the reaction L-glutamyl-tRNA(Gln) + L-glutamine + ATP + H2O = L-glutaminyl-tRNA(Gln) + L-glutamate + ADP + phosphate + H(+). In terms of biological role, allows the formation of correctly charged Gln-tRNA(Gln) through the transamidation of misacylated Glu-tRNA(Gln) in organisms which lack glutaminyl-tRNA synthetase. The reaction takes place in the presence of glutamine and ATP through an activated gamma-phospho-Glu-tRNA(Gln). The chain is Glutamyl-tRNA(Gln) amidotransferase subunit A from Pseudomonas syringae pv. syringae (strain B728a).